The primary structure comprises 256 residues: Thiazole synthase (256 aa).

Catalysis depends on lysine 97, which acts as the Schiff-base intermediate with DXP. 1-deoxy-D-xylulose 5-phosphate-binding positions include glycine 158, 184–185, and 206–207; these read AG and NT.

It belongs to the ThiG family. As to quaternary structure, homotetramer. Forms heterodimers with either ThiH or ThiS.

The protein resides in the cytoplasm. The enzyme catalyses [ThiS sulfur-carrier protein]-C-terminal-Gly-aminoethanethioate + 2-iminoacetate + 1-deoxy-D-xylulose 5-phosphate = [ThiS sulfur-carrier protein]-C-terminal Gly-Gly + 2-[(2R,5Z)-2-carboxy-4-methylthiazol-5(2H)-ylidene]ethyl phosphate + 2 H2O + H(+). It functions in the pathway cofactor biosynthesis; thiamine diphosphate biosynthesis. Catalyzes the rearrangement of 1-deoxy-D-xylulose 5-phosphate (DXP) to produce the thiazole phosphate moiety of thiamine. Sulfur is provided by the thiocarboxylate moiety of the carrier protein ThiS. In vitro, sulfur can be provided by H(2)S. The protein is Thiazole synthase of Flavobacterium psychrophilum (strain ATCC 49511 / DSM 21280 / CIP 103535 / JIP02/86).